The chain runs to 276 residues: Undecaprenyl-diphosphatase 2 (276 aa).

A run of 8 helical transmembrane segments spans residues 1–21 (MSLWFLVFLSVLQGVTELFPV), 44–64 (QLLPFLVALHLGTALALLWYF), 87–107 (GHLMWALIIGTIPTGIVGLLL), 114–134 (VFHDLRIVAVALIINGVLLWV), 150–170 (MTFKQAFFVGLAQIGALIPGF), 190–210 (AAEFSFLLGTPIIFAAGVLEL), 220–240 (LMDALLGGVLTAIAAYLSVRF), and 251–271 (LASFGVYCVIAGVFFLGWFML).

This sequence belongs to the UppP family.

The protein localises to the cell inner membrane. The catalysed reaction is di-trans,octa-cis-undecaprenyl diphosphate + H2O = di-trans,octa-cis-undecaprenyl phosphate + phosphate + H(+). In terms of biological role, catalyzes the dephosphorylation of undecaprenyl diphosphate (UPP). Confers resistance to bacitracin. The chain is Undecaprenyl-diphosphatase 2 from Burkholderia ambifaria (strain ATCC BAA-244 / DSM 16087 / CCUG 44356 / LMG 19182 / AMMD) (Burkholderia cepacia (strain AMMD)).